The sequence spans 386 residues: uncharacterized protein (386 aa).

The next 11 membrane-spanning stretches (helical) occupy residues 3-23 (WFSL…LVAI), 42-62 (LVGH…IFLW), 72-92 (FASF…SLFG), 102-122 (VPTI…LGVF), 145-165 (ILST…IAYF), 183-203 (FGGH…WLLL), 212-232 (WFLN…QIFL), 244-264 (TWGY…ITLV), 276-296 (ILVL…MIVG), 308-328 (VIAS…QELG), and 333-353 (LGKF…FLSS).

It to R.prowazekii RP382.

The protein resides in the cell membrane. This is an uncharacterized protein from Aquifex aeolicus (strain VF5).